A 196-amino-acid polypeptide reads, in one-letter code: NADH-quinone oxidoreductase subunit B (196 aa).

Residues Cys-75, Cys-76, Cys-140, and Cys-170 each coordinate [4Fe-4S] cluster.

It belongs to the complex I 20 kDa subunit family. As to quaternary structure, NDH-1 is composed of 14 different subunits. Subunits NuoB, C, D, E, F, and G constitute the peripheral sector of the complex. Requires [4Fe-4S] cluster as cofactor.

It is found in the cell inner membrane. It carries out the reaction a quinone + NADH + 5 H(+)(in) = a quinol + NAD(+) + 4 H(+)(out). Its function is as follows. NDH-1 shuttles electrons from NADH, via FMN and iron-sulfur (Fe-S) centers, to quinones in the respiratory chain. Couples the redox reaction to proton translocation (for every two electrons transferred, four hydrogen ions are translocated across the cytoplasmic membrane), and thus conserves the redox energy in a proton gradient. This Caulobacter sp. (strain K31) protein is NADH-quinone oxidoreductase subunit B.